Reading from the N-terminus, the 140-residue chain is MALPKANRLKSRHDFQAVFREGLRRNSSHFTLRALKPSSARKSSLDTAAQTQPVDEVQNIPSTLIGVSISTKVSKRAVVRNRIKRQITAAMQQLLPRLAPGWKLVVIVKPTAAESKCGSQQFLQELEQLLAQTEVLHGHS.

It belongs to the RnpA family. Consists of a catalytic RNA component (M1 or rnpB) and a protein subunit.

It carries out the reaction Endonucleolytic cleavage of RNA, removing 5'-extranucleotides from tRNA precursor.. Its function is as follows. RNaseP catalyzes the removal of the 5'-leader sequence from pre-tRNA to produce the mature 5'-terminus. It can also cleave other RNA substrates such as 4.5S RNA. The protein component plays an auxiliary but essential role in vivo by binding to the 5'-leader sequence and broadening the substrate specificity of the ribozyme. The sequence is that of Ribonuclease P protein component from Nostoc sp. (strain PCC 7120 / SAG 25.82 / UTEX 2576).